The primary structure comprises 153 residues: MSLDLALDVQYATTSDYLPSEEQLALWVKTAIGNSMKQAELTIRIVDARESQMLNGTYRGKDKPTNVLSFPFEAPPEIELPLLGDLVICASVVENEAREQDKTLEAHWAHMVVHGCLHLLGYDHIEDEEAEEMESLETQLIESLGFTDPYKEQ.

Zn(2+) is bound by residues histidine 114, histidine 118, and histidine 124.

The protein belongs to the endoribonuclease YbeY family. The cofactor is Zn(2+).

Its subcellular location is the cytoplasm. Single strand-specific metallo-endoribonuclease involved in late-stage 70S ribosome quality control and in maturation of the 3' terminus of the 16S rRNA. The chain is Endoribonuclease YbeY from Shewanella oneidensis (strain ATCC 700550 / JCM 31522 / CIP 106686 / LMG 19005 / NCIMB 14063 / MR-1).